The primary structure comprises 409 residues: MSTHPIHVFSEIGKLKKVMLHRPGKELENLMPDYLERLLFDDIPFLEDAQKEHDNFAQALRNEGIEVLYLEKLAAESLTSPEIRDQFIEEYLDEANIRGRQTKVAIRELLQGIKDNQELVEKTMAGVQKAELPEIPEAAKGLTDLVESDYPFAIDPMPNLYFTRDPFATIGNAVSLNHMYADTRNRETLYGKYIFKYHPVYGGNVELVYNREEDTRIEGGDELVLSKDVLAVGISQRTDAASIEKLLVNIFKKNVGFKKVLAFEFANNRKFMHLDTVFTMVDYDKFTIHPEIQGNLRVFSVTYENEQLKIVEEKGDLAELLAENLGVEKVTLIPCGDGNAVAAAREQWNDGSNTLTIAPGVVVVYDRNTVTNKKLEEYGLRLIKIRGSELVRGRGGPRCMSMPFEREEI.

The Amidino-cysteine intermediate role is filled by Cys399.

Belongs to the arginine deiminase family.

The protein resides in the cytoplasm. The catalysed reaction is L-arginine + H2O = L-citrulline + NH4(+). It participates in amino-acid degradation; L-arginine degradation via ADI pathway; carbamoyl phosphate from L-arginine: step 1/2. This Streptococcus gordonii (strain Challis / ATCC 35105 / BCRC 15272 / CH1 / DL1 / V288) protein is Arginine deiminase.